The primary structure comprises 375 residues: Ornithine transcarbamylase, chloroplastic (375 aa).

The transit peptide at 1–53 directs the protein to the chloroplast; the sequence is MAAAMASHVSTARSPALSFSSSSSSFFPGTTLRRFSAVSLPSPALPRLRVSCQ. Ala-54 is subject to N-acetylalanine. Residues 123–126, Arg-174, His-201, and Gln-204 each bind carbamoyl phosphate; that span reads SMRT. L-ornithine contacts are provided by Asn-232, Asp-293, Ser-297, and Met-298. Cys-333 (proton acceptor) is an active-site residue. Carbamoyl phosphate contacts are provided by residues 333 to 334 and Arg-361; that span reads CL.

This sequence belongs to the aspartate/ornithine carbamoyltransferase superfamily. OTCase family.

Its subcellular location is the plastid. The protein resides in the chloroplast. The enzyme catalyses carbamoyl phosphate + L-ornithine = L-citrulline + phosphate + H(+). The polypeptide is Ornithine transcarbamylase, chloroplastic (OTC) (Arabidopsis thaliana (Mouse-ear cress)).